We begin with the raw amino-acid sequence, 181 residues long: Peptidyl-tRNA hydrolase (181 aa).

Residue Tyr-14 coordinates tRNA. His-19 acts as the Proton acceptor in catalysis. Residues Tyr-62, Asn-64, and Asn-108 each contribute to the tRNA site.

Belongs to the PTH family. As to quaternary structure, monomer.

It localises to the cytoplasm. The enzyme catalyses an N-acyl-L-alpha-aminoacyl-tRNA + H2O = an N-acyl-L-amino acid + a tRNA + H(+). In terms of biological role, hydrolyzes ribosome-free peptidyl-tRNAs (with 1 or more amino acids incorporated), which drop off the ribosome during protein synthesis, or as a result of ribosome stalling. Its function is as follows. Catalyzes the release of premature peptidyl moieties from peptidyl-tRNA molecules trapped in stalled 50S ribosomal subunits, and thus maintains levels of free tRNAs and 50S ribosomes. The polypeptide is Peptidyl-tRNA hydrolase (Campylobacter jejuni subsp. doylei (strain ATCC BAA-1458 / RM4099 / 269.97)).